A 255-amino-acid polypeptide reads, in one-letter code: 5'-nucleotidase SurE (255 aa).

Residues Asp8, Asp9, Ser40, and Asn93 each contribute to the a divalent metal cation site.

This sequence belongs to the SurE nucleotidase family. A divalent metal cation is required as a cofactor.

The protein resides in the cytoplasm. The catalysed reaction is a ribonucleoside 5'-phosphate + H2O = a ribonucleoside + phosphate. Its function is as follows. Nucleotidase that shows phosphatase activity on nucleoside 5'-monophosphates. The protein is 5'-nucleotidase SurE of Bradyrhizobium sp. (strain BTAi1 / ATCC BAA-1182).